The chain runs to 84 residues: Sulfur carrier protein TusA (84 aa).

Cys-21 (cysteine persulfide intermediate) is an active-site residue.

Belongs to the sulfur carrier protein TusA family.

Its subcellular location is the cytoplasm. In terms of biological role, sulfur carrier protein which probably makes part of a sulfur-relay system. This is Sulfur carrier protein TusA from Pseudomonas savastanoi pv. phaseolicola (strain 1448A / Race 6) (Pseudomonas syringae pv. phaseolicola (strain 1448A / Race 6)).